Here is a 151-residue protein sequence, read N- to C-terminus: Protein ripply1 (151 aa).

Positions 57-60 (WRPW) match the WRPW motif motif. Residues 96–131 (HPVRLFWPKSRSFDYLYSAGEILLQNFPVQATINLY) form a ripply homology domain region. The disordered stretch occupies residues 130–151 (LYEDSDSEEEEEDEEQEDEEEK). A compositionally biased stretch (acidic residues) spans 132–151 (EDSDSEEEEEDEEQEDEEEK).

This sequence belongs to the ripply family.

The protein localises to the nucleus. In terms of biological role, plays a role in somitogenesis. Essential for transcriptional repression of the segmental patterning genes, thus terminating the segmentation program in the presomitic mesoderm, and also required for the maintenance of rostrocaudal polarity in somites. The polypeptide is Protein ripply1 (Homo sapiens (Human)).